A 203-amino-acid polypeptide reads, in one-letter code: MNGFLVCQRGNFLKWYGTSSFSRTANRGVHISAEARINERIRVPEVRLVGPNGEQVGIVRIEDARKLAFDADLDLVEVAPTAKPPVCKIMDYGKFKYEAAQKARESRKNQQQTVVKEQKLRPKIDDHDYETKKSNVIRFLEKGSKVKVTIMFRGREQARPELGYRLLERLANDVAEYGVVETRAKQDGRNMTMVIGPLRKGKK.

It belongs to the IF-3 family. In terms of assembly, monomer.

It is found in the cytoplasm. Functionally, IF-3 binds to the 30S ribosomal subunit and shifts the equilibrium between 70S ribosomes and their 50S and 30S subunits in favor of the free subunits, thus enhancing the availability of 30S subunits on which protein synthesis initiation begins. The sequence is that of Translation initiation factor IF-3 from Corynebacterium efficiens (strain DSM 44549 / YS-314 / AJ 12310 / JCM 11189 / NBRC 100395).